The chain runs to 208 residues: Sodium/potassium-transporting ATPase subunit beta-1-interacting protein 2 (208 aa).

Transmembrane regions (helical) follow at residues 1–23 (MGYC…CVLE), 35–55 (APIL…FGTI), 64–84 (GYAV…CFYL), and 148–168 (VAHS…ACYV).

It belongs to the NKAIN family. As to quaternary structure, interacts with ATP1B1. In terms of tissue distribution, detected in the brain only and specifically in neurons; expressed in multiple regions such as cerebral cortex, thalamus, cerebellum, olfactory bulb and brainstem, but not in the hippocampus.

It is found in the cell membrane. The polypeptide is Sodium/potassium-transporting ATPase subunit beta-1-interacting protein 2 (Nkain2) (Mus musculus (Mouse)).